The following is a 324-amino-acid chain: Cytochrome c biogenesis protein CcsA (324 aa).

Helical transmembrane passes span 15-35, 44-64, 71-91, 98-118, 143-163, 228-248, 255-275, and 289-309; these read FSIVCIVITIHLITLLIDEII, GMIATFLCITVLLVTRCIYSG, LYESLIFLSWSLSFIHIVPYF, LSTITASSVIFTQGFATSGLL, MILGYAALLCGSLLSVALLVL, VISLGFIFLTIGILSGAVWAN, WNWDPKETWAFITWIVFAVYL, and AIVASMGFLIIWICYFGVNLL.

The protein belongs to the CcmF/CycK/Ccl1/NrfE/CcsA family. In terms of assembly, may interact with Ccs1.

It is found in the plastid. The protein localises to the chloroplast thylakoid membrane. Its function is as follows. Required during biogenesis of c-type cytochromes (cytochrome c6 and cytochrome f) at the step of heme attachment. The protein is Cytochrome c biogenesis protein CcsA of Daucus carota (Wild carrot).